The following is a 55-amino-acid chain: MAKDKDVRPIIKLKSTAGTGYTYVTRKNRRNDPDRMVLKKYDPRIRKHVEFREER.

This sequence belongs to the bacterial ribosomal protein bL33 family.

This chain is Large ribosomal subunit protein bL33, found in Arthrobacter sp. (strain FB24).